The primary structure comprises 1174 residues: PR domain zinc finger protein 15 (1174 aa).

The region spanning 75–185 (SNLEIRRLDD…AGTELRVWYA (111 aa)) is the SET domain. Positions 252–307 (LPAGGQQHEAASEKEPDAPRMEPPTAAESKSIQSVMVTKEPKKKPRRGRKPKASKV) are disordered. The segment covering 261-271 (AASEKEPDAPR) has biased composition (basic and acidic residues). The span at 292–304 (PKKKPRRGRKPKA) shows a compositional bias: basic residues. 2 C2H2-type zinc fingers span residues 402–424 (HQCG…VRSH) and 434–457 (FKCE…SYKH). Residues 468 to 486 (YRCGSCGKTFRMESALEFH) form a C2H2-type 3; degenerate zinc finger. 2 C2H2-type zinc fingers span residues 495 to 517 (FQCE…KKKH) and 522 to 544 (FACE…QRRH). Residue Lys552 forms a Glycyl lysine isopeptide (Lys-Gly) (interchain with G-Cter in SUMO2) linkage. 2 C2H2-type zinc fingers span residues 571–593 (SGCP…LLTH) and 598–620 (YTCE…IHVH). A disordered region spans residues 639–658 (IGISSEENDDNSDESADSEP). The span at 644-655 (EENDDNSDESAD) shows a compositional bias: acidic residues. 8 C2H2-type zinc fingers span residues 661-684 (YSCK…MEVH), 689-711 (HGCS…MVIH), 725-747 (HPCE…KLIH), 753-775 (HACE…MRVH), 781-803 (YLCA…MKLH), 809-831 (YECK…YKRH), 837-859 (FMCE…KLIH), and 865-888 (WTCS…QLTH). 2 disordered regions span residues 957 to 1007 (AEGK…GDET) and 1147 to 1174 (LQPP…MYSY). Positions 962 to 973 (GKAAKRSHKRKQ) are enriched in basic residues. Residues 1154–1174 (AAPQQAVQPQVQNEQQQMYSY) show a composition bias toward low complexity.

In terms of tissue distribution, expressed in embryonic stem cells (ESCs) (at protein level).

The protein localises to the nucleus. Its function is as follows. Sequence-specific DNA-binding transcriptional regulator. Plays a role as a molecular node in a transcriptional network regulating embryonic development and cell fate decision. Stimulates the expression of upstream key transcriptional activators and repressors of the Wnt/beta-catenin and MAPK/ERK pathways, respectively, that are essential for naive pluripotency and self-renewal maintenance of embryonic stem cells (ESCs). Specifically promotes SPRY1 and RSPO1 transcription activation through recognition and direct binding of a specific DNA sequence in their promoter regions. Also plays a role in induced pluripotent stem cells (iPSCs) reprogramming. Involved in early embryo development. The protein is PR domain zinc finger protein 15 of Mus musculus (Mouse).